Reading from the N-terminus, the 144-residue chain is Small ribosomal subunit protein bS6 (144 aa).

Positions 99-144 (KASPLAPCEEKGEEGKAEDAADELTTFGMADDDDLGDDDDTVEAGI) are disordered. The span at 106 to 117 (CEEKGEEGKAED) shows a compositional bias: basic and acidic residues. The segment covering 128–144 (ADDDDLGDDDDTVEAGI) has biased composition (acidic residues).

It belongs to the bacterial ribosomal protein bS6 family.

Functionally, binds together with bS18 to 16S ribosomal RNA. The polypeptide is Small ribosomal subunit protein bS6 (Magnetococcus marinus (strain ATCC BAA-1437 / JCM 17883 / MC-1)).